A 338-amino-acid polypeptide reads, in one-letter code: Tagatose 1,6-diphosphate aldolase (338 aa).

This sequence belongs to the aldolase LacD family.

It carries out the reaction D-tagatofuranose 1,6-bisphosphate = D-glyceraldehyde 3-phosphate + dihydroxyacetone phosphate. It functions in the pathway carbohydrate metabolism; D-tagatose 6-phosphate degradation; D-glyceraldehyde 3-phosphate and glycerone phosphate from D-tagatose 6-phosphate: step 2/2. This is Tagatose 1,6-diphosphate aldolase from Listeria innocua serovar 6a (strain ATCC BAA-680 / CLIP 11262).